Here is a 252-residue protein sequence, read N- to C-terminus: Geranylgeranylglyceryl phosphate synthase (252 aa).

The Mg(2+) site is built by D27 and S56. Sn-glycerol 1-phosphate contacts are provided by residues 175–181, 206–207, and 228–229; these read YLEAGSG, GG, and GT.

It belongs to the GGGP/HepGP synthase family. Group II subfamily. It depends on Mg(2+) as a cofactor.

The protein localises to the cytoplasm. The catalysed reaction is sn-glycerol 1-phosphate + (2E,6E,10E)-geranylgeranyl diphosphate = sn-3-O-(geranylgeranyl)glycerol 1-phosphate + diphosphate. It participates in membrane lipid metabolism; glycerophospholipid metabolism. Its function is as follows. Prenyltransferase that catalyzes the transfer of the geranylgeranyl moiety of geranylgeranyl diphosphate (GGPP) to the C3 hydroxyl of sn-glycerol-1-phosphate (G1P). This reaction is the first ether-bond-formation step in the biosynthesis of archaeal membrane lipids. The protein is Geranylgeranylglyceryl phosphate synthase of Pyrococcus abyssi (strain GE5 / Orsay).